A 142-amino-acid polypeptide reads, in one-letter code: Sec-independent protein translocase protein TatB (142 aa).

Residues 1-21 (MFDIGASELLVLVIVAIVVIG) traverse the membrane as a helical segment. A disordered region spans residues 75–142 (RETAAQETAA…PAARPGSQQP (68 aa)). The segment covering 76–94 (ETAAQETAAAQGQTPAAAE) has biased composition (low complexity). Over residues 123 to 133 (AKVEARVEEAP) the composition is skewed to basic and acidic residues.

It belongs to the TatB family. As to quaternary structure, the Tat system comprises two distinct complexes: a TatABC complex, containing multiple copies of TatA, TatB and TatC subunits, and a separate TatA complex, containing only TatA subunits. Substrates initially bind to the TatABC complex, which probably triggers association of the separate TatA complex to form the active translocon.

The protein localises to the cell inner membrane. Functionally, part of the twin-arginine translocation (Tat) system that transports large folded proteins containing a characteristic twin-arginine motif in their signal peptide across membranes. Together with TatC, TatB is part of a receptor directly interacting with Tat signal peptides. TatB may form an oligomeric binding site that transiently accommodates folded Tat precursor proteins before their translocation. In Novosphingobium aromaticivorans (strain ATCC 700278 / DSM 12444 / CCUG 56034 / CIP 105152 / NBRC 16084 / F199), this protein is Sec-independent protein translocase protein TatB.